A 442-amino-acid polypeptide reads, in one-letter code: tRNA modification GTPase MnmE (442 aa).

Arginine 27, glutamate 84, and lysine 124 together coordinate (6S)-5-formyl-5,6,7,8-tetrahydrofolate. The TrmE-type G domain occupies 221–366 (GLHVVIVGAP…LLDALQAFAE (146 aa)). GTP-binding positions include 231-236 (NAGKSS), 250-256 (SEEAGTT), and 275-278 (DTAG). Mg(2+) contacts are provided by serine 235 and threonine 256. A (6S)-5-formyl-5,6,7,8-tetrahydrofolate-binding site is contributed by lysine 442.

It belongs to the TRAFAC class TrmE-Era-EngA-EngB-Septin-like GTPase superfamily. TrmE GTPase family. In terms of assembly, homodimer. Heterotetramer of two MnmE and two MnmG subunits. Requires K(+) as cofactor.

The protein resides in the cytoplasm. Functionally, exhibits a very high intrinsic GTPase hydrolysis rate. Involved in the addition of a carboxymethylaminomethyl (cmnm) group at the wobble position (U34) of certain tRNAs, forming tRNA-cmnm(5)s(2)U34. The polypeptide is tRNA modification GTPase MnmE (Brucella melitensis biotype 1 (strain ATCC 23456 / CCUG 17765 / NCTC 10094 / 16M)).